We begin with the raw amino-acid sequence, 355 residues long: Protein RecA (355 aa).

74-81 (GPESSGKT) provides a ligand contact to ATP.

The protein belongs to the RecA family.

Its subcellular location is the cytoplasm. Can catalyze the hydrolysis of ATP in the presence of single-stranded DNA, the ATP-dependent uptake of single-stranded DNA by duplex DNA, and the ATP-dependent hybridization of homologous single-stranded DNAs. It interacts with LexA causing its activation and leading to its autocatalytic cleavage. The sequence is that of Protein RecA from Cytophaga hutchinsonii (strain ATCC 33406 / DSM 1761 / CIP 103989 / NBRC 15051 / NCIMB 9469 / D465).